The sequence spans 322 residues: DNA primase small subunit PriS (322 aa).

Active-site residues include Asp-86, Asp-88, and Asp-226.

It belongs to the eukaryotic-type primase small subunit family. In terms of assembly, heterodimer of a small subunit (PriS) and a large subunit (PriL). Mg(2+) serves as cofactor. Requires Mn(2+) as cofactor.

In terms of biological role, catalytic subunit of DNA primase, an RNA polymerase that catalyzes the synthesis of short RNA molecules used as primers for DNA polymerase during DNA replication. The small subunit contains the primase catalytic core and has DNA synthesis activity on its own. Binding to the large subunit stabilizes and modulates the activity, increasing the rate of DNA synthesis while decreasing the length of the DNA fragments, and conferring RNA synthesis capability. The DNA polymerase activity may enable DNA primase to also catalyze primer extension after primer synthesis. May also play a role in DNA repair. This Thermoplasma acidophilum (strain ATCC 25905 / DSM 1728 / JCM 9062 / NBRC 15155 / AMRC-C165) protein is DNA primase small subunit PriS.